The sequence spans 604 residues: Cytosolic Fe-S cluster assembly factor nar1 (604 aa).

6 residues coordinate [4Fe-4S] cluster: cysteine 20, cysteine 62, cysteine 65, cysteine 68, cysteine 215, and cysteine 270. The interval 434-461 (LPGAKPAVRPAAGRRQPMSRNAVSTGSS) is disordered. Positions 451-461 (MSRNAVSTGSS) are enriched in polar residues. [4Fe-4S] cluster is bound by residues cysteine 473 and cysteine 477.

Belongs to the NARF family.

In terms of biological role, component of the cytosolic Fe/S protein assembly machinery. Required for maturation of extramitochondrial Fe/S proteins. May play a role in the transfer of pre-assembled Fe/S clusters to target apoproteins. This Penicillium rubens (strain ATCC 28089 / DSM 1075 / NRRL 1951 / Wisconsin 54-1255) (Penicillium chrysogenum) protein is Cytosolic Fe-S cluster assembly factor nar1 (nar1).